We begin with the raw amino-acid sequence, 556 residues long: Dihydroxy-acid dehydratase (556 aa).

D78 provides a ligand contact to Mg(2+). C119 serves as a coordination point for [2Fe-2S] cluster. Mg(2+) contacts are provided by D120 and K121. Residue K121 is modified to N6-carboxylysine. C195 contacts [2Fe-2S] cluster. E446 contributes to the Mg(2+) binding site. S472 acts as the Proton acceptor in catalysis.

Belongs to the IlvD/Edd family. As to quaternary structure, homodimer. Requires [2Fe-2S] cluster as cofactor. Mg(2+) is required as a cofactor.

The enzyme catalyses (2R)-2,3-dihydroxy-3-methylbutanoate = 3-methyl-2-oxobutanoate + H2O. It carries out the reaction (2R,3R)-2,3-dihydroxy-3-methylpentanoate = (S)-3-methyl-2-oxopentanoate + H2O. The protein operates within amino-acid biosynthesis; L-isoleucine biosynthesis; L-isoleucine from 2-oxobutanoate: step 3/4. Its pathway is amino-acid biosynthesis; L-valine biosynthesis; L-valine from pyruvate: step 3/4. In terms of biological role, functions in the biosynthesis of branched-chain amino acids. Catalyzes the dehydration of (2R,3R)-2,3-dihydroxy-3-methylpentanoate (2,3-dihydroxy-3-methylvalerate) into 2-oxo-3-methylpentanoate (2-oxo-3-methylvalerate) and of (2R)-2,3-dihydroxy-3-methylbutanoate (2,3-dihydroxyisovalerate) into 2-oxo-3-methylbutanoate (2-oxoisovalerate), the penultimate precursor to L-isoleucine and L-valine, respectively. This is Dihydroxy-acid dehydratase from Desulfatibacillum aliphaticivorans.